We begin with the raw amino-acid sequence, 141 residues long: Cholinesterase (141 aa).

A glycan (N-linked (GlcNAc...) asparagine) is linked at Asn-39. Substrate is bound at residue 49–50; the sequence is GG. Ser-131 serves as the catalytic Acyl-ester intermediate. Ser-131 is modified (phosphoserine).

It belongs to the type-B carboxylesterase/lipase family. Homotetramer; disulfide-linked. Dimer of dimers. As to expression, present in most cells except erythrocytes.

The protein resides in the secreted. It carries out the reaction an acylcholine + H2O = a carboxylate + choline + H(+). Its function is as follows. Esterase with broad substrate specificity. Contributes to the inactivation of the neurotransmitter acetylcholine. Can degrade neurotoxic organophosphate esters. The polypeptide is Cholinesterase (BCHE) (Canis lupus familiaris (Dog)).